Here is a 674-residue protein sequence, read N- to C-terminus: DNA ligase (674 aa).

NAD(+)-binding positions include 34–38, 83–84, and E117; these read DFEFD and SL. Residue K119 is the N6-AMP-lysine intermediate of the active site. R140, E184, K297, and K321 together coordinate NAD(+). Residues C415, C418, C433, and C439 each contribute to the Zn(2+) site. The 77-residue stretch at 598–674 folds into the BRCT domain; sequence LVNTNFEGQS…IDEDEFERML (77 aa).

This sequence belongs to the NAD-dependent DNA ligase family. LigA subfamily. Mg(2+) is required as a cofactor. Mn(2+) serves as cofactor.

It carries out the reaction NAD(+) + (deoxyribonucleotide)n-3'-hydroxyl + 5'-phospho-(deoxyribonucleotide)m = (deoxyribonucleotide)n+m + AMP + beta-nicotinamide D-nucleotide.. DNA ligase that catalyzes the formation of phosphodiester linkages between 5'-phosphoryl and 3'-hydroxyl groups in double-stranded DNA using NAD as a coenzyme and as the energy source for the reaction. It is essential for DNA replication and repair of damaged DNA. This is DNA ligase from Chlorobaculum parvum (strain DSM 263 / NCIMB 8327) (Chlorobium vibrioforme subsp. thiosulfatophilum).